The chain runs to 362 residues: E3 ubiquitin-protein ligase rififylin (362 aa).

The disordered stretch occupies residues 17–37 (ETPPPQGARTQAYSNPGYSSF). The span at 24–37 (ARTQAYSNPGYSSF) shows a compositional bias: polar residues. An FYVE-type zinc finger spans residues 41–93 (TGSEPSCKACGVHFASTTRKQTCLDCKKNFCMTCSSQEGNGPRLCLLCLRFRA). The SAP 1 domain occupies 101-120 (LMKMKVKDLRDYLSLHDIST). The tract at residues 162-183 (LTQPQSSTVPPTSPGLPSSPAQ) is disordered. Phosphoserine occurs at positions 225, 228, 231, and 239. In terms of domain architecture, SAP 2 spans 249-263 (IEGLTVRQLKEILAR). An RING-type zinc finger spans residues 315–350 (CKICMDSPIDCVLLECGHMVTCTKCGKRMNECPICR).

In terms of assembly, interacts with CASP8 and CASP10. Interacts with RIPK1 (via protein kinase domain); involved in RIPK1 ubiquitination. Interacts with PRR5L. Interacts (via RING-type zinc finger) with p53/TP53; involved in p53/TP53 ubiquitination. Interacts (via RING-type zinc finger) with MDM2; the interaction stabilizes MDM2. Post-translationally, autoubiquitinated. In terms of processing, palmitoylated. Undergoes caspase-mediated cleavage upon death-receptor activation, by TNFSF10 for instance. May be mediated by the caspases CASP8 and CASP10 in a negative feedback loop. As to expression, ubiquitous. Detected in cerebrum, cerebellum, midbrain, brain stem, hippocampus, striatum, liver, heart, lung, kidney, muscle, spleen and testis.

Its subcellular location is the cytoplasm. The protein resides in the cytosol. It is found in the cell membrane. It localises to the recycling endosome membrane. It carries out the reaction S-ubiquitinyl-[E2 ubiquitin-conjugating enzyme]-L-cysteine + [acceptor protein]-L-lysine = [E2 ubiquitin-conjugating enzyme]-L-cysteine + N(6)-ubiquitinyl-[acceptor protein]-L-lysine.. The protein operates within protein modification; protein ubiquitination. E3 ubiquitin-protein ligase that regulates several biological processes through the ubiquitin-mediated proteasomal degradation of various target proteins. Mediates 'Lys-48'-linked polyubiquitination of PRR5L and its subsequent proteasomal degradation thereby indirectly regulating cell migration through the mTORC2 complex. Also ubiquitinates the caspases CASP8 and CASP10, promoting their proteasomal degradation, to negatively regulate apoptosis downstream of death domain receptors. Also negatively regulates the tumor necrosis factor-mediated signaling pathway through targeting of RIPK1 to ubiquitin-mediated proteasomal degradation. Negatively regulates p53/TP53 through its direct ubiquitination and targeting to proteasomal degradation. Indirectly, may also negatively regulate p53/TP53 through ubiquitination and degradation of SFN. May also play a role in endocytic recycling. The polypeptide is E3 ubiquitin-protein ligase rififylin (Rattus norvegicus (Rat)).